An 812-amino-acid polypeptide reads, in one-letter code: Fibroblast growth factor receptor 1 (812 aa).

The N-terminal stretch at 1-20 (MFSGMSLLLWGVLLGAALSV) is a signal peptide. The Extracellular segment spans residues 21-371 (ARPPSTLPDE…PALLASPLQL (351 aa)). The Ig-like C2-type 1 domain occupies 25–118 (STLPDEVAPK…YTVLCSVNVS (94 aa)). Cys-54 and Cys-100 are disulfide-bonded. Asn-76, Asn-116, Asn-133, Asn-223, Asn-236, Asn-260, Asn-292, Asn-313, and Asn-326 each carry an N-linked (GlcNAc...) asparagine glycan. Residues 121–153 (LPSAEDDDEDDDNSSSEEKAAENSKPNRPLWSH) form a disordered region. Positions 124-135 (AEDDDEDDDNSS) are enriched in acidic residues. Ig-like C2-type domains follow at residues 154-242 (PEKM…YQLD) and 251-353 (PILQ…AWLT). Cys-174 and Cys-226 are disulfide-bonded. Residues Cys-273 and Cys-337 are joined by a disulfide bond. The helical transmembrane segment at 372–393 (EIIIYCTGAAFVSAMVVTIIIF) threads the bilayer. Residues 394–812 (KMKHPSKKSD…KYSNGGLKKR (419 aa)) are Cytoplasmic-facing. A Phosphotyrosine; by autocatalysis modification is found at Tyr-457. Residues 472 to 761 (LILGKPLGEG…LALSSNQEYL (290 aa)) enclose the Protein kinase domain. Residues 478–484 (LGEGCFG), Lys-508, 556–558 (EYT), and Asn-562 each bind ATP. Tyr-577 and Tyr-579 each carry phosphotyrosine; by autocatalysis. Asp-617 (proton acceptor) is an active-site residue. ATP contacts are provided by Arg-621 and Asp-635. Phosphotyrosine; by autocatalysis is present on residues Tyr-647, Tyr-648, Tyr-724, and Tyr-760. Positions 784–812 (SGEDSMFSHDPLPDEPCLPKYSNGGLKKR) are disordered.

Belongs to the protein kinase superfamily. Tyr protein kinase family. Fibroblast growth factor receptor subfamily. In terms of assembly, monomer. Homodimer after ligand binding. Interacts with il17rd. In terms of processing, autophosphorylated. Binding of FGF family members together with heparan sulfate proteoglycan or heparin promotes receptor dimerization and autophosphorylation on tyrosine residues. Autophosphorylation occurs in trans between the two FGFR molecules present in the dimer and proceeds in a highly ordered manner. Phosphotyrosine residues provide docking sites for interacting proteins and so are crucial for FGFR1 function and its regulation. Ubiquitinated. FGFR1 is rapidly ubiquitinated after autophosphorylation, leading to internalization and degradation. Post-translationally, N-glycosylated in the endoplasmic reticulum. The N-glycan chains undergo further maturation to an Endo H-resistant form in the Golgi apparatus.

It is found in the cell membrane. It localises to the nucleus. The protein localises to the cytoplasm. Its subcellular location is the cytosol. The protein resides in the cytoplasmic vesicle. It catalyses the reaction L-tyrosyl-[protein] + ATP = O-phospho-L-tyrosyl-[protein] + ADP + H(+). With respect to regulation, present in an inactive conformation in the absence of bound ligand. Ligand binding leads to dimerization and activation by sequential autophosphorylation on tyrosine residues. Tyrosine-protein kinase that acts as a cell-surface receptor for fibroblast growth factors and plays an essential role in the regulation of embryonic development, cell proliferation, differentiation and migration. Required for normal mesoderm patterning and normal skeletogenesis. Phosphorylates PLCG1, FRS2, GAB1 and SHB. Ligand binding leads to the activation of several signaling cascades. Activation of PLCG1 leads to the production of the cellular signaling molecules diacylglycerol and inositol-1,4,5-trisphosphate. Phosphorylation of FRS2 triggers recruitment of GRB2, GAB1, PIK3R1 and SOS1, and mediates activation of RAS, MAPK1/ERK2, MAPK3/ERK1 and the MAP kinase signaling pathway, as well as of the AKT1 signaling pathway. Promotes phosphorylation of SHC1, STAT1 and PTPN11/SHP2. In the nucleus, enhances RPS6KA1 and CREB1 activity and contributes to the regulation of transcription. FGFR1 signaling is down-regulated by ubiquitination, internalization and degradation. The chain is Fibroblast growth factor receptor 1 (fgfr1) from Xenopus laevis (African clawed frog).